Consider the following 326-residue polypeptide: Phospho-N-acetylmuramoyl-pentapeptide-transferase (326 aa).

Helical transmembrane passes span 3–23 (ISIS…PAFI), 51–71 (TMGG…LALF), 79–99 (VGMI…DDFL), 115–135 (LALQ…GGDM), 138–158 (VFSY…FWLV), 169–189 (GIDG…GVIA), 195–215 (MDIL…FVFN), 221–243 (VFMG…MALH), and 306–326 (FFFW…LYLM).

The protein belongs to the glycosyltransferase 4 family. MraY subfamily. Requires Mg(2+) as cofactor.

It localises to the cell membrane. The enzyme catalyses UDP-N-acetyl-alpha-D-muramoyl-L-alanyl-gamma-D-glutamyl-L-lysyl-D-alanyl-D-alanine + di-trans,octa-cis-undecaprenyl phosphate = Mur2Ac(oyl-L-Ala-gamma-D-Glu-L-Lys-D-Ala-D-Ala)-di-trans,octa-cis-undecaprenyl diphosphate + UMP. It functions in the pathway cell wall biogenesis; peptidoglycan biosynthesis. Its function is as follows. Catalyzes the initial step of the lipid cycle reactions in the biosynthesis of the cell wall peptidoglycan: transfers peptidoglycan precursor phospho-MurNAc-pentapeptide from UDP-MurNAc-pentapeptide onto the lipid carrier undecaprenyl phosphate, yielding undecaprenyl-pyrophosphoryl-MurNAc-pentapeptide, known as lipid I. The chain is Phospho-N-acetylmuramoyl-pentapeptide-transferase from Streptococcus pneumoniae (strain ATCC 700669 / Spain 23F-1).